The following is an 89-amino-acid chain: Large ribosomal subunit protein eL34 (89 aa).

A disordered region spans residues 1 to 22 (MPAPRYKSGSSKKVYRKAPGNS).

It belongs to the eukaryotic ribosomal protein eL34 family.

The protein is Large ribosomal subunit protein eL34 of Methanococcus maripaludis (strain C7 / ATCC BAA-1331).